Reading from the N-terminus, the 140-residue chain is Large ribosomal subunit protein uL11 (140 aa).

This sequence belongs to the universal ribosomal protein uL11 family. In terms of assembly, part of the ribosomal stalk of the 50S ribosomal subunit. Interacts with L10 and the large rRNA to form the base of the stalk. L10 forms an elongated spine to which L12 dimers bind in a sequential fashion forming a multimeric L10(L12)X complex. Post-translationally, one or more lysine residues are methylated.

In terms of biological role, forms part of the ribosomal stalk which helps the ribosome interact with GTP-bound translation factors. The sequence is that of Large ribosomal subunit protein uL11 from Desulfovibrio desulfuricans (strain ATCC 27774 / DSM 6949 / MB).